Reading from the N-terminus, the 524-residue chain is Glutamyl-tRNA(Gln) amidotransferase subunit A, mitochondrial (524 aa).

Active-site charge relay system residues include K76 and S171. Catalysis depends on S195, which acts as the Acyl-ester intermediate.

Belongs to the amidase family. GatA subfamily. In terms of assembly, subunit of the heterotrimeric GatCAB amidotransferase (AdT) complex, composed of A (qrsl1), B (gatb) and C (gatc) subunits.

Its subcellular location is the mitochondrion. The enzyme catalyses L-glutamyl-tRNA(Gln) + L-glutamine + ATP + H2O = L-glutaminyl-tRNA(Gln) + L-glutamate + ADP + phosphate + H(+). Allows the formation of correctly charged Gln-tRNA(Gln) through the transamidation of misacylated Glu-tRNA(Gln) in the mitochondria. The reaction takes place in the presence of glutamine and ATP through an activated gamma-phospho-Glu-tRNA(Gln). This chain is Glutamyl-tRNA(Gln) amidotransferase subunit A, mitochondrial (qrsl1), found in Xenopus laevis (African clawed frog).